A 575-amino-acid chain; its full sequence is G2/mitotic-specific cyclin-B3 (575 aa).

Residues 75-83 (RSALGNLTN) carry the D-box motif. At S215 the chain carries Phosphoserine.

It belongs to the cyclin family. Cyclin AB subfamily. As to quaternary structure, interacts with Cdk1 kinase. Ubiquitinated. Ubiquitination leads to its degradation in early anaphase. In terms of tissue distribution, in embryo, it is expressed in all mitotically proliferating cells, with a high level in neuroblasts. Not expressed in old embryos and thereafter. Not expressed in endoreplicating tissues.

It localises to the nucleus. In terms of biological role, cyclins are positive regulatory subunits of the cyclin-dependent kinases (CDKs), and thereby play an essential role in the control of the cell cycle, notably via their destruction during cell division. Probably functions redundantly with other cyclins in regulation of cell cycle. Its presence may be required to delay a deadline for completing cytokinesis that is ordinary imposed by nuclear envelope reformation. Degradation of CycB and CycB3 promote cytokinesis furrow initiation and ingression. Required with CycB for female fertility. This is G2/mitotic-specific cyclin-B3 (CycB3) from Drosophila melanogaster (Fruit fly).